The primary structure comprises 86 residues: Protein Tat (86 aa).

Residues methionine 1 to asparagine 24 form an interaction with human CREBBP region. The interval methionine 1 to glycine 48 is transactivation. Cysteine 22, cysteine 25, and cysteine 27 together coordinate Zn(2+). The cysteine-rich stretch occupies residues cysteine 22–cysteine 37. An N6-acetyllysine; by host PCAF modification is found at lysine 28. Residues cysteine 30, histidine 33, cysteine 34, and cysteine 37 each contribute to the Zn(2+) site. Residues phenylalanine 38 to glycine 48 are core. A compositionally biased stretch (basic residues) spans glycine 48–proline 58. The interval glycine 48 to glutamate 86 is disordered. The Nuclear localization signal, RNA-binding (TAR), and protein transduction signature appears at arginine 49–arginine 57. Positions arginine 49 to glutamate 86 are interaction with the host capping enzyme RNGTT. 2 positions are modified to N6-acetyllysine; by host EP300 and GCN5L2: lysine 50 and lysine 51. Asymmetric dimethylarginine; by host PRMT6 occurs at positions 52 and 53. The span at serine 62–glycine 79 shows a compositional bias: polar residues. Lysine 71 participates in a covalent cross-link: Glycyl lysine isopeptide (Lys-Gly) (interchain with G-Cter in ubiquitin). Positions arginine 78–aspartate 80 match the Cell attachment site motif.

It belongs to the lentiviruses Tat family. As to quaternary structure, interacts with host CCNT1. Associates with the P-TEFb complex composed at least of Tat, P-TEFb (CDK9 and CCNT1), TAR RNA, RNA Pol II. Recruits the HATs CREBBP, TAF1/TFIID, EP300, PCAF and GCN5L2. Interacts with host KAT5/Tip60; this interaction targets the latter to degradation. Interacts with the host deacetylase SIRT1. Interacts with host capping enzyme RNGTT; this interaction stimulates RNGTT. Binds to host KDR, and to the host integrins ITGAV/ITGB3 and ITGA5/ITGB1. Interacts with host KPNB1/importin beta-1 without previous binding to KPNA1/importin alpha-1. Interacts with EIF2AK2. Interacts with host nucleosome assembly protein NAP1L1; this interaction may be required for the transport of Tat within the nucleus, since the two proteins interact at the nuclear rim. Interacts with host C1QBP/SF2P32; this interaction involves lysine-acetylated Tat. Interacts with the host chemokine receptors CCR2, CCR3 and CXCR4. Interacts with host DPP4/CD26; this interaction may trigger an anti-proliferative effect. Interacts with host LDLR. Interacts with the host extracellular matrix metalloproteinase MMP1. Interacts with host PRMT6; this interaction mediates Tat's methylation. Interacts with, and is ubiquitinated by MDM2/Hdm2. Interacts with host PSMC3 and HTATIP2. Interacts with STAB1; this interaction may overcome SATB1-mediated repression of IL2 and IL2RA (interleukin) in T cells by binding to the same domain than HDAC1. Interacts (when acetylated) with human CDK13, thereby increasing HIV-1 mRNA splicing and promoting the production of the doubly spliced HIV-1 protein Nef. Interacts with host TBP; this interaction modulates the activity of transcriptional pre-initiation complex. Interacts with host RELA. Interacts with host PLSCR1; this interaction negatively regulates Tat transactivation activity by altering its subcellular distribution. In terms of processing, asymmetrical arginine methylation by host PRMT6 seems to diminish the transactivation capacity of Tat and affects the interaction with host CCNT1. Post-translationally, acetylation by EP300, CREBBP, GCN5L2/GCN5 and PCAF regulates the transactivation activity of Tat. EP300-mediated acetylation of Lys-50 promotes dissociation of Tat from the TAR RNA through the competitive binding to PCAF's bromodomain. In addition, the non-acetylated Tat's N-terminus can also interact with PCAF. PCAF-mediated acetylation of Lys-28 enhances Tat's binding to CCNT1. Lys-50 is deacetylated by SIRT1. Polyubiquitination by host MDM2 does not target Tat to degradation, but activates its transactivation function and fosters interaction with CCNT1 and TAR RNA. In terms of processing, phosphorylated by EIF2AK2 on serine and threonine residues adjacent to the basic region important for TAR RNA binding and function. Phosphorylation of Tat by EIF2AK2 is dependent on the prior activation of EIF2AK2 by dsRNA.

The protein resides in the host nucleus. The protein localises to the host nucleolus. It localises to the host cytoplasm. It is found in the secreted. In terms of biological role, transcriptional activator that increases RNA Pol II processivity, thereby increasing the level of full-length viral transcripts. Recognizes a hairpin structure at the 5'-LTR of the nascent viral mRNAs referred to as the transactivation responsive RNA element (TAR) and recruits the cyclin T1-CDK9 complex (P-TEFb complex) that will in turn hyperphosphorylate the RNA polymerase II to allow efficient elongation. The CDK9 component of P-TEFb and other Tat-activated kinases hyperphosphorylate the C-terminus of RNA Pol II that becomes stabilized and much more processive. Other factors such as HTATSF1/Tat-SF1, SUPT5H/SPT5, and HTATIP2 are also important for Tat's function. Besides its effect on RNA Pol II processivity, Tat induces chromatin remodeling of proviral genes by recruiting the histone acetyltransferases (HATs) CREBBP, EP300 and PCAF to the chromatin. This also contributes to the increase in proviral transcription rate, especially when the provirus integrates in transcriptionally silent region of the host genome. To ensure maximal activation of the LTR, Tat mediates nuclear translocation of NF-kappa-B by interacting with host RELA. Through its interaction with host TBP, Tat may also modulate transcription initiation. Tat can reactivate a latently infected cell by penetrating in it and transactivating its LTR promoter. In the cytoplasm, Tat is thought to act as a translational activator of HIV-1 mRNAs. Extracellular circulating Tat can be endocytosed by surrounding uninfected cells via the binding to several surface receptors such as CD26, CXCR4, heparan sulfate proteoglycans (HSPG) or LDLR. Neurons are rarely infected, but they internalize Tat via their LDLR. Through its interaction with nuclear HATs, Tat is potentially able to control the acetylation-dependent cellular gene expression. Modulates the expression of many cellular genes involved in cell survival, proliferation or in coding for cytokines or cytokine receptors. Tat plays a role in T-cell and neurons apoptosis. Tat induced neurotoxicity and apoptosis probably contribute to neuroAIDS. Circulating Tat also acts as a chemokine-like and/or growth factor-like molecule that binds to specific receptors on the surface of the cells, affecting many cellular pathways. In the vascular system, Tat binds to ITGAV/ITGB3 and ITGA5/ITGB1 integrins dimers at the surface of endothelial cells and competes with bFGF for heparin-binding sites, leading to an excess of soluble bFGF. This Homo sapiens (Human) protein is Protein Tat.